A 353-amino-acid chain; its full sequence is Ribosome biogenesis protein BRX1 homolog (353 aa).

Over residues 1–10 the composition is skewed to basic residues; that stretch reads MAATKRKRRG. A disordered region spans residues 1–46; that stretch reads MAATKRKRRGGLAVQAKKLKRDAKDGKLPAKANDVSEEAAEEEKDR. In terms of domain architecture, Brix spans 60–249; that stretch reads ERILIFSSRG…LIKIFQGSFG (190 aa). K160 is covalently cross-linked (Glycyl lysine isopeptide (Lys-Gly) (interchain with G-Cter in SUMO2)). S261 is subject to Phosphoserine. The residue at position 276 (K276) is an N6-acetyllysine. Glycyl lysine isopeptide (Lys-Gly) (interchain with G-Cter in SUMO2) cross-links involve residues K314 and K322.

This sequence belongs to the BRX1 family.

The protein localises to the nucleus. Its subcellular location is the nucleolus. Its function is as follows. Required for biogenesis of the 60S ribosomal subunit. This is Ribosome biogenesis protein BRX1 homolog (BRIX1) from Bos taurus (Bovine).